The sequence spans 386 residues: Succinate--CoA ligase [ADP-forming] subunit beta (386 aa).

The 236-residue stretch at 9 to 244 folds into the ATP-grasp domain; sequence KDLLTAYQLP…PSQENIRDVL (236 aa). ATP contacts are provided by residues Lys46, 53–55, Val102, and Glu107; that span reads GRG. Mg(2+) is bound by residues Asn199 and Asp213. Substrate contacts are provided by residues Asn264 and 321–323; that span reads GIM.

This sequence belongs to the succinate/malate CoA ligase beta subunit family. Heterotetramer of two alpha and two beta subunits. Mg(2+) serves as cofactor.

The catalysed reaction is succinate + ATP + CoA = succinyl-CoA + ADP + phosphate. It carries out the reaction GTP + succinate + CoA = succinyl-CoA + GDP + phosphate. Its pathway is carbohydrate metabolism; tricarboxylic acid cycle; succinate from succinyl-CoA (ligase route): step 1/1. Succinyl-CoA synthetase functions in the citric acid cycle (TCA), coupling the hydrolysis of succinyl-CoA to the synthesis of either ATP or GTP and thus represents the only step of substrate-level phosphorylation in the TCA. The beta subunit provides nucleotide specificity of the enzyme and binds the substrate succinate, while the binding sites for coenzyme A and phosphate are found in the alpha subunit. This Chlamydia trachomatis serovar A (strain ATCC VR-571B / DSM 19440 / HAR-13) protein is Succinate--CoA ligase [ADP-forming] subunit beta.